The primary structure comprises 386 residues: MDFNLSNSQSDIYESAYRFACDVLDQDAQTRISQKILSTELWKKAAAYGFAHGPVSHQFGGSELGALDTALMIEALGKGSRDIGLSFSLCAHLCACVIPLYRFGSSELKDKYLESLVTGKLIAANAATEPDAGSDIYNMQATAQPCEGGYILNGKKIFITNAPIADVFIIYAKTNPDHGFLGVSAFLIEKGTPGLNVGEVIPKDCLSNCPWSEIVFNDIFIPQSQRIGMEGAGGAIFHDSMIWEKGCLSALFVGGLARLLETTLEYAKARQQFGKAIGQFQSVSNRIIDMKLRLEQCRLMLYRACWKHDQGQDAEADIAMSKLLISEYAVQSGLDAIQTFGGAAMDQELGLVRHLLNMIPSRIFSGTNDIQKEIIARKLGLRGTSS.

FAD contacts are provided by residues 125 to 134 (NAATEPDAGS) and 158 to 160 (FIT). Glu-244 (proton acceptor) is an active-site residue. Residues Arg-270, Gln-281, 338–342 (QTFGG), and 367–369 (TND) contribute to the FAD site.

It belongs to the acyl-CoA dehydrogenase family. The cofactor is FAD.

The enzyme catalyses L-prolyl-[peptidyl-carrier protein] + 2 oxidized [electron-transfer flavoprotein] + H(+) = (1H-pyrrole-2-carbonyl)-[peptidyl-carrier protein] + 2 reduced [electron-transfer flavoprotein]. The protein operates within antibiotic biosynthesis; prodigiosin biosynthesis. Functionally, involved in the biosynthesis of 4-methoxy-2,2'-bipyrrole-5-carbaldehyde (MBC), one of the terminal products involved in the biosynthesis of the red antibiotic prodigiosin (Pig). Catalyzes the desaturation of the L-prolyl-[PigG] to yield 1H-pyrrole-2-carbonyl-[PigG]. In Serratia sp. (strain ATCC 39006) (Prodigiosinella confusarubida), this protein is L-prolyl-[peptidyl-carrier protein] dehydrogenase.